A 154-amino-acid polypeptide reads, in one-letter code: Ribosome maturation factor RimP (154 aa).

Belongs to the RimP family.

The protein resides in the cytoplasm. Required for maturation of 30S ribosomal subunits. The chain is Ribosome maturation factor RimP from Alkaliphilus oremlandii (strain OhILAs) (Clostridium oremlandii (strain OhILAs)).